A 400-amino-acid polypeptide reads, in one-letter code: Phosphoglycerate kinase (400 aa).

Substrate is bound by residues 20–22 (DLN), Arg-35, 58–61 (HQGR), Arg-115, and Arg-155. ATP is bound by residues Glu-330 and 356–359 (GGDT).

Belongs to the phosphoglycerate kinase family. In terms of assembly, monomer.

Its subcellular location is the cytoplasm. It catalyses the reaction (2R)-3-phosphoglycerate + ATP = (2R)-3-phospho-glyceroyl phosphate + ADP. The protein operates within carbohydrate degradation; glycolysis; pyruvate from D-glyceraldehyde 3-phosphate: step 2/5. The chain is Phosphoglycerate kinase from Haloarcula marismortui (strain ATCC 43049 / DSM 3752 / JCM 8966 / VKM B-1809) (Halobacterium marismortui).